Reading from the N-terminus, the 92-residue chain is Small ribosomal subunit protein uS19 (92 aa).

It belongs to the universal ribosomal protein uS19 family.

In terms of biological role, protein S19 forms a complex with S13 that binds strongly to the 16S ribosomal RNA. This chain is Small ribosomal subunit protein uS19, found in Variovorax paradoxus (strain S110).